The following is a 243-amino-acid chain: MAGHSKWANIQHRKGRQDAKRGKLWTKIIREITVAARAGGPDPDSNPRLRMAWDKATDANMPKDNIQRAIQRGAGGADGANYEEVRYEGYGIGGAAVIVDCMTDNRTRTVAEVRHAFAKNGGNLGQEGSVAFMFKHCGQFVFAPGTAEDVVMEAALEAGAEDVTTDDEGVIEVICAPADYAAVRQAFEAAGLKAEVEGIIMKPQNETELTGEDAVKMQKLLDALEGLDDVQEVYTTVVFDEAQ.

Residues 1 to 21 (MAGHSKWANIQHRKGRQDAKR) form a disordered region.

It belongs to the TACO1 family.

The protein localises to the cytoplasm. The polypeptide is Probable transcriptional regulatory protein Bpet3099 (Bordetella petrii (strain ATCC BAA-461 / DSM 12804 / CCUG 43448)).